The primary structure comprises 197 residues: Lymphotoxin-alpha (197 aa).

An N-terminal signal peptide occupies residues 1–26 (MTPPGRLYLPLLLGLLLAPPPPGAQG). One can recognise a THD domain in the interval 55 to 197 (PAAHLVGDPS…SSVFFGAFAL (143 aa)). The N-linked (GlcNAc...) asparagine glycan is linked to asparagine 88. Cysteine 112 and cysteine 148 form a disulfide bridge.

This sequence belongs to the tumor necrosis factor family. Homotrimer, and heterotrimer of either two LTB and one LTA subunits or (less prevalent) two LTA and one LTB subunits. Interacts with TNFRSF14.

The protein localises to the secreted. It localises to the membrane. Cytokine that in its homotrimeric form binds to TNFRSF1A/TNFR1, TNFRSF1B/TNFBR and TNFRSF14/HVEM. In its heterotrimeric form with LTB binds to TNFRSF3/LTBR. Lymphotoxin is produced by lymphocytes and is cytotoxic for a wide range of tumor cells in vitro and in vivo. This chain is Lymphotoxin-alpha (LTA), found in Oryctolagus cuniculus (Rabbit).